Reading from the N-terminus, the 34-residue chain is Photosystem II reaction center protein Psb30 (34 aa).

A helical membrane pass occupies residues 5–25; sequence VLFQLTALIFVVAAGPLVIVL.

It belongs to the Psb30/Ycf12 family. PSII is composed of 1 copy each of membrane proteins PsbA, PsbB, PsbC, PsbD, PsbE, PsbF, PsbH, PsbI, PsbJ, PsbK, PsbL, PsbM, PsbT, PsbX, PsbY, PsbZ, Psb30/Ycf12, peripheral proteins of the oxygen-evolving complex and a large number of cofactors. It forms dimeric complexes.

The protein resides in the plastid. It localises to the chloroplast thylakoid membrane. In terms of biological role, a core subunit of photosystem II (PSII), probably helps stabilize the reaction center. This is Photosystem II reaction center protein Psb30 from Tupiella akineta (Green alga).